The following is a 300-amino-acid chain: GTP-binding protein At2g22870 (300 aa).

The region spanning 119-297 is the EngB-type G domain; the sequence is DRPEIAILGR…LLHMSQLRNY (179 aa). GTP is bound by residues 127–134, 154–158, 172–175, 239–242, and 276–278; these read GRSNVGKS, GKTQL, DLPG, TKCD, and TSS. 2 residues coordinate Mg(2+): serine 134 and threonine 156.

Belongs to the TRAFAC class TrmE-Era-EngA-EngB-Septin-like GTPase superfamily. EngB GTPase family. The cofactor is Mg(2+).

In Arabidopsis thaliana (Mouse-ear cress), this protein is GTP-binding protein At2g22870 (EMB2001).